The sequence spans 668 residues: Fructose-1,6-bisphosphatase class 3 (668 aa).

The protein belongs to the FBPase class 3 family. Mn(2+) serves as cofactor.

It carries out the reaction beta-D-fructose 1,6-bisphosphate + H2O = beta-D-fructose 6-phosphate + phosphate. It participates in carbohydrate biosynthesis; gluconeogenesis. The sequence is that of Fructose-1,6-bisphosphatase class 3 from Clostridium botulinum (strain Langeland / NCTC 10281 / Type F).